Reading from the N-terminus, the 291-residue chain is tRNA-cytidine(32) 2-sulfurtransferase (291 aa).

The PP-loop motif signature appears at 36–41; it reads SGGKDS. Residues Cys111, Cys114, and Cys202 each coordinate [4Fe-4S] cluster. The segment at 258-291 is disordered; the sequence is RDPWLDAEDEEAEDCGEPPAGDGVVSLGGARGGR. Residues 262-273 are compositionally biased toward acidic residues; sequence LDAEDEEAEDCG.

It belongs to the TtcA family. In terms of assembly, homodimer. The cofactor is Mg(2+). [4Fe-4S] cluster is required as a cofactor.

The protein resides in the cytoplasm. It catalyses the reaction cytidine(32) in tRNA + S-sulfanyl-L-cysteinyl-[cysteine desulfurase] + AH2 + ATP = 2-thiocytidine(32) in tRNA + L-cysteinyl-[cysteine desulfurase] + A + AMP + diphosphate + H(+). It functions in the pathway tRNA modification. Its function is as follows. Catalyzes the ATP-dependent 2-thiolation of cytidine in position 32 of tRNA, to form 2-thiocytidine (s(2)C32). The sulfur atoms are provided by the cysteine/cysteine desulfurase (IscS) system. The polypeptide is tRNA-cytidine(32) 2-sulfurtransferase (Anaeromyxobacter dehalogenans (strain 2CP-1 / ATCC BAA-258)).